A 566-amino-acid chain; its full sequence is APC membrane recruitment protein 2 (566 aa).

4 disordered regions span residues 120–176 (KKNG…PGLI), 192–237 (TQKP…SPCS), 277–307 (VTGC…GKKV), and 342–533 (MIPP…RTKI). 3 stretches are compositionally biased toward basic and acidic residues: residues 123–134 (GKSENVRGEQAE), 155–168 (SKKD…KEGA), and 192–204 (TQKP…KSTE). 2 stretches are compositionally biased toward basic and acidic residues: residues 364–377 (REVK…DRNA) and 389–411 (YRKE…RNSD). Low complexity predominate over residues 464–476 (PPLSHSHSKPLSP). Composition is skewed to polar residues over residues 477 to 489 (VTTS…ASSN) and 504 to 517 (HTTN…SGSA).

Belongs to the Amer family.

The protein localises to the cell membrane. Functionally, negative regulator of the canonical Wnt signaling pathway involved in neuroectodermal patterning. Acts by specifically binding phosphatidylinositol 4,5-bisphosphate (PtdIns(4,5)P2), translocating to the cell membrane and interacting with key regulators of the canonical Wnt signaling pathway, such as components of the beta-catenin destruction complex. This is APC membrane recruitment protein 2 (amer2) from Xenopus tropicalis (Western clawed frog).